Consider the following 500-residue polypeptide: Galactofuranose transporter ATP-binding protein YtfR (500 aa).

2 consecutive ABC transporter domains span residues 10–245 and 259–497; these read LRTE…LGRE and LSDK…IMNA. 42 to 49 is a binding site for ATP; the sequence is GENGAGKS.

Belongs to the ABC transporter superfamily. In terms of assembly, the complex is composed of two ATP-binding proteins (YtfR), two transmembrane proteins (YtfT and YjfF) and a solute-binding protein (YtfQ).

The protein localises to the cell inner membrane. It catalyses the reaction D-galactofuranose(out) + ATP + H2O = D-galactofuranose(in) + ADP + phosphate + H(+). In terms of biological role, part of the ABC transporter complex YtfQRT-YjfF involved in galactofuranose transport. Responsible for energy coupling to the transport system. The chain is Galactofuranose transporter ATP-binding protein YtfR (ytfR) from Escherichia coli O157:H7.